The chain runs to 160 residues: ATP synthase subunit b 3 (160 aa).

A helical membrane pass occupies residues 5 to 25 (PTFWVLVAFVLFVAAVWRIAA).

Belongs to the ATPase B chain family. F-type ATPases have 2 components, F(1) - the catalytic core - and F(0) - the membrane proton channel. F(1) has five subunits: alpha(3), beta(3), gamma(1), delta(1), epsilon(1). F(0) has three main subunits: a(1), b(2) and c(10-14). The alpha and beta chains form an alternating ring which encloses part of the gamma chain. F(1) is attached to F(0) by a central stalk formed by the gamma and epsilon chains, while a peripheral stalk is formed by the delta and b chains.

It localises to the cell inner membrane. F(1)F(0) ATP synthase produces ATP from ADP in the presence of a proton or sodium gradient. F-type ATPases consist of two structural domains, F(1) containing the extramembraneous catalytic core and F(0) containing the membrane proton channel, linked together by a central stalk and a peripheral stalk. During catalysis, ATP synthesis in the catalytic domain of F(1) is coupled via a rotary mechanism of the central stalk subunits to proton translocation. Its function is as follows. Component of the F(0) channel, it forms part of the peripheral stalk, linking F(1) to F(0). This Rhodospirillum centenum (strain ATCC 51521 / SW) protein is ATP synthase subunit b 3.